The primary structure comprises 531 residues: Peptide chain release factor 3 (531 aa).

Positions alanine 13–lysine 282 constitute a tr-type G domain. GTP-binding positions include serine 22–threonine 29, aspartate 90–histidine 94, and asparagine 144–aspartate 147.

It belongs to the TRAFAC class translation factor GTPase superfamily. Classic translation factor GTPase family. PrfC subfamily.

The protein localises to the cytoplasm. Its function is as follows. Increases the formation of ribosomal termination complexes and stimulates activities of RF-1 and RF-2. It binds guanine nucleotides and has strong preference for UGA stop codons. It may interact directly with the ribosome. The stimulation of RF-1 and RF-2 is significantly reduced by GTP and GDP, but not by GMP. This Psychrobacter arcticus (strain DSM 17307 / VKM B-2377 / 273-4) protein is Peptide chain release factor 3.